The chain runs to 182 residues: Adenylate kinase (182 aa).

Gly12–Thr17 contacts ATP. Residues Ser32–Val61 are NMP. AMP is bound by residues Thr33, Arg38, Glu59–Val61, Gly85–Arg88, and Gln92. Residues Ala126–Asp132 are LID. Arg127 contacts ATP. AMP-binding residues include Arg129 and Arg140. Position 168 (Gly168) interacts with ATP.

Belongs to the adenylate kinase family. Monomer.

The protein resides in the cytoplasm. It catalyses the reaction AMP + ATP = 2 ADP. It functions in the pathway purine metabolism; AMP biosynthesis via salvage pathway; AMP from ADP: step 1/1. Functionally, catalyzes the reversible transfer of the terminal phosphate group between ATP and AMP. Plays an important role in cellular energy homeostasis and in adenine nucleotide metabolism. The protein is Adenylate kinase of Synechococcus sp. (strain RCC307).